A 197-amino-acid chain; its full sequence is GTP cyclohydrolase 1 (197 aa).

3 residues coordinate Zn(2+): Cys85, His88, and Cys156.

This sequence belongs to the GTP cyclohydrolase I family. Toroid-shaped homodecamer, composed of two pentamers of five dimers.

It carries out the reaction GTP + H2O = 7,8-dihydroneopterin 3'-triphosphate + formate + H(+). It participates in cofactor biosynthesis; 7,8-dihydroneopterin triphosphate biosynthesis; 7,8-dihydroneopterin triphosphate from GTP: step 1/1. This chain is GTP cyclohydrolase 1, found in Mesorhizobium japonicum (strain LMG 29417 / CECT 9101 / MAFF 303099) (Mesorhizobium loti (strain MAFF 303099)).